The sequence spans 34 residues: Photosystem I reaction center subunit XII (34 aa).

A helical transmembrane segment spans residues 9-29 (LIALSLIVVVHAGVLALRLGI).

Belongs to the PsaM family.

It localises to the cellular thylakoid membrane. In Prochlorococcus marinus (strain MIT 9312), this protein is Photosystem I reaction center subunit XII.